A 376-amino-acid polypeptide reads, in one-letter code: Queuine tRNA-ribosyltransferase (376 aa).

The Proton acceptor role is filled by Asp-89. Substrate contacts are provided by residues 89-93 (DSGGF), Asp-143, Gln-194, and Gly-221. The tract at residues 252-258 (GVGIPSN) is RNA binding. Asp-271 serves as the catalytic Nucleophile. The segment at 276 to 280 (ARNGR) is RNA binding; important for wobble base 34 recognition. The Zn(2+) site is built by Cys-309, Cys-311, Cys-314, and His-340.

This sequence belongs to the queuine tRNA-ribosyltransferase family. As to quaternary structure, homodimer. Within each dimer, one monomer is responsible for RNA recognition and catalysis, while the other monomer binds to the replacement base PreQ1. Requires Zn(2+) as cofactor.

It carries out the reaction 7-aminomethyl-7-carbaguanine + guanosine(34) in tRNA = 7-aminomethyl-7-carbaguanosine(34) in tRNA + guanine. The protein operates within tRNA modification; tRNA-queuosine biosynthesis. Its function is as follows. Catalyzes the base-exchange of a guanine (G) residue with the queuine precursor 7-aminomethyl-7-deazaguanine (PreQ1) at position 34 (anticodon wobble position) in tRNAs with GU(N) anticodons (tRNA-Asp, -Asn, -His and -Tyr). Catalysis occurs through a double-displacement mechanism. The nucleophile active site attacks the C1' of nucleotide 34 to detach the guanine base from the RNA, forming a covalent enzyme-RNA intermediate. The proton acceptor active site deprotonates the incoming PreQ1, allowing a nucleophilic attack on the C1' of the ribose to form the product. After dissociation, two additional enzymatic reactions on the tRNA convert PreQ1 to queuine (Q), resulting in the hypermodified nucleoside queuosine (7-(((4,5-cis-dihydroxy-2-cyclopenten-1-yl)amino)methyl)-7-deazaguanosine). The protein is Queuine tRNA-ribosyltransferase of Clostridium botulinum (strain Okra / Type B1).